A 181-amino-acid polypeptide reads, in one-letter code: Thioredoxin-like protein CITRX2, chloroplastic (181 aa).

The N-terminal 70 residues, 1 to 70, are a transit peptide targeting the chloroplast; that stretch reads MQAATLSFQP…PDVATGKYVR (70 aa). One can recognise a Thioredoxin domain in the interval 72-181; the sequence is DYLVKKVSAK…MMRDIINNDL (110 aa). Residues cysteine 104 and cysteine 107 each act as nucleophile in the active site. Cysteines 104 and 107 form a disulfide.

Belongs to the thioredoxin family. Plant CITRX-type subfamily.

It localises to the plastid. The protein resides in the chloroplast. Its function is as follows. Probable thiol-disulfide oxidoreductase that may play a role in proper chloroplast development. In Nicotiana benthamiana, this protein is Thioredoxin-like protein CITRX2, chloroplastic.